The chain runs to 235 residues: Acyl-protein thioesterase 1 (235 aa).

Active-site charge relay system residues include Ser119, Asp172, and His206.

This sequence belongs to the AB hydrolase superfamily. AB hydrolase 2 family.

It localises to the cytoplasm. The protein localises to the nucleus. It carries out the reaction S-hexadecanoyl-L-cysteinyl-[protein] + H2O = L-cysteinyl-[protein] + hexadecanoate + H(+). Functionally, hydrolyzes fatty acids from S-acylated cysteine residues in proteins with a strong preference for palmitoylated G-alpha proteins over other acyl substrates. Mediates the deacylation of G-alpha proteins such as GPA1 in vivo, but has weak or no activity toward palmitoylated Ras proteins. Has weak lysophospholipase activity in vitro; however such activity may not exist in vivo. The sequence is that of Acyl-protein thioesterase 1 from Eremothecium gossypii (strain ATCC 10895 / CBS 109.51 / FGSC 9923 / NRRL Y-1056) (Yeast).